Reading from the N-terminus, the 440-residue chain is Enolase (440 aa).

Positions 120–189 (KAAAAEKRVP…TEAMRQGAEV (70 aa)) are igE-binding determinant. Residues His159 and Glu168 each contribute to the substrate site. Residue Glu211 is the Proton donor of the active site. Mg(2+) contacts are provided by Asp246, Glu297, and Asp324. Substrate is bound by residues Glu297 and Asp324. The active-site Proton acceptor is the Lys349. Substrate is bound by residues 376-379 (SHRS) and Lys400.

It belongs to the enolase family. As to quaternary structure, homodimer. The cofactor is Mg(2+).

The protein resides in the cytoplasm. The catalysed reaction is (2R)-2-phosphoglycerate = phosphoenolpyruvate + H2O. It participates in carbohydrate degradation; glycolysis; pyruvate from D-glyceraldehyde 3-phosphate: step 4/5. This Davidiella tassiana (Mycosphaerella tassiana) protein is Enolase (ENO).